The chain runs to 246 residues: MDWQKITEKMCDFIQEKVKNSQSQGVVLGLSGGIDSALVATLCKRALKENVFALLMPTQISNKANLEDALRLCADLNLEYKIIEIQSILDAFIKQSENTTLVSLGNFAARIRMSLLYDYSALKNSLVIGTSNKSELLLGYGTIYGDLACAFNPIGSLYKSEIYTLAKYLNLHENFIKKAPSADLWENQSDEADLGFSYAKIDEGLKALETNDEKLLRTLDPSLIAMLKNRMQKNTFKGKMPEILEI.

29–36 (GLSGGIDS) serves as a coordination point for ATP. Residue Asp-35 coordinates Mg(2+). Residue Arg-110 participates in deamido-NAD(+) binding. Residue Thr-130 coordinates ATP. Residue Glu-135 participates in Mg(2+) binding. Residues Lys-159 and Ser-181 each coordinate ATP.

This sequence belongs to the NAD synthetase family. Homodimer.

It catalyses the reaction deamido-NAD(+) + NH4(+) + ATP = AMP + diphosphate + NAD(+) + H(+). It participates in cofactor biosynthesis; NAD(+) biosynthesis; NAD(+) from deamido-NAD(+) (ammonia route): step 1/1. Functionally, catalyzes the ATP-dependent amidation of deamido-NAD to form NAD. Uses ammonia as a nitrogen source. The sequence is that of NH(3)-dependent NAD(+) synthetase from Campylobacter jejuni subsp. jejuni serotype O:6 (strain 81116 / NCTC 11828).